Consider the following 238-residue polypeptide: Uridylate kinase (238 aa).

Lys-12–Gly-15 lines the ATP pocket. Gly-54 lines the UMP pocket. Residues Gly-55 and Arg-59 each contribute to the ATP site. UMP is bound by residues Asp-74 and Thr-135–Thr-142. Residues Thr-162, Tyr-168, and Asp-171 each contribute to the ATP site.

It belongs to the UMP kinase family. As to quaternary structure, homohexamer.

It localises to the cytoplasm. The catalysed reaction is UMP + ATP = UDP + ADP. Its pathway is pyrimidine metabolism; CTP biosynthesis via de novo pathway; UDP from UMP (UMPK route): step 1/1. Inhibited by UTP. Its function is as follows. Catalyzes the reversible phosphorylation of UMP to UDP. This is Uridylate kinase from Aromatoleum aromaticum (strain DSM 19018 / LMG 30748 / EbN1) (Azoarcus sp. (strain EbN1)).